The primary structure comprises 164 residues: Phosphopantetheine adenylyltransferase (164 aa).

Threonine 14 is a substrate binding site. Residues 14–15 (TF) and histidine 22 each bind ATP. Residues lysine 46, methionine 78, and arginine 92 each contribute to the substrate site. ATP is bound by residues 93–95 (GLR), glutamate 103, and 128–134 (HAFISST).

It belongs to the bacterial CoaD family. As to quaternary structure, homohexamer. Mg(2+) serves as cofactor.

It localises to the cytoplasm. The catalysed reaction is (R)-4'-phosphopantetheine + ATP + H(+) = 3'-dephospho-CoA + diphosphate. Its pathway is cofactor biosynthesis; coenzyme A biosynthesis; CoA from (R)-pantothenate: step 4/5. Reversibly transfers an adenylyl group from ATP to 4'-phosphopantetheine, yielding dephospho-CoA (dPCoA) and pyrophosphate. The polypeptide is Phosphopantetheine adenylyltransferase (Vibrio vulnificus (strain CMCP6)).